A 574-amino-acid chain; its full sequence is MYND-type zinc finger protein C31F10.10c (574 aa).

2 disordered regions span residues 207–253 and 283–307; these read DSGD…QDPR and MTTPSSPSYSRQTGPASETINDEID. Composition is skewed to polar residues over residues 243–253 and 283–301; these read IYSNDSFQDPR and MTTPSSPSYSRQTGPASET. The segment at 482-523 adopts an MYND-type; degenerate zinc-finger fold; the sequence is NLLCNKWEEHSRQFAKCRRCRRTKYCSKECQHQAWPGHSRWC. 4 residues coordinate Zn(2+): Cys-498, Cys-501, His-519, and Cys-523. Residues 534–574 are disordered; the sequence is KRESSKINSVTESESTASPAASVIPVGTESVTSSTQSDSRL. Residues 542–556 show a composition bias toward low complexity; the sequence is SVTESESTASPAASV. Residues 562–574 are compositionally biased toward polar residues; it reads ESVTSSTQSDSRL.

Belongs to the MUB1/samB family.

It is found in the nucleus. It localises to the cytoplasm. The protein resides in the cytoskeleton. Its subcellular location is the microtubule organizing center. The protein localises to the spindle pole body. The protein is MYND-type zinc finger protein C31F10.10c of Schizosaccharomyces pombe (strain 972 / ATCC 24843) (Fission yeast).